The following is a 519-amino-acid chain: Exodeoxyribonuclease 7 large subunit (519 aa).

Belongs to the XseA family. As to quaternary structure, heterooligomer composed of large and small subunits.

The protein localises to the cytoplasm. The catalysed reaction is Exonucleolytic cleavage in either 5'- to 3'- or 3'- to 5'-direction to yield nucleoside 5'-phosphates.. In terms of biological role, bidirectionally degrades single-stranded DNA into large acid-insoluble oligonucleotides, which are then degraded further into small acid-soluble oligonucleotides. The protein is Exodeoxyribonuclease 7 large subunit of Cereibacter sphaeroides (strain ATCC 17025 / ATH 2.4.3) (Rhodobacter sphaeroides).